A 25-amino-acid polypeptide reads, in one-letter code: Caerin-1.7 (25 aa).

Residue Leu25 is modified to Leucine amide.

Belongs to the frog skin active peptide (FSAP) family. Caerin subfamily. Caerin-1.7.1 does not have any antibacterial activity. In terms of tissue distribution, expressed by the skin dorsal glands.

Its subcellular location is the secreted. Functionally, antibacterial peptide, that adopts an alpha helical conformation which can disrupt bacterial membranes. Each caerin displays a different antimicrobial specificity. The polypeptide is Caerin-1.7 (Ranoidea xanthomera (Northern orange-eyed tree frog)).